The primary structure comprises 188 residues: Archaemetzincin (188 aa).

A Zn(2+)-binding site is contributed by His-137. The active-site Proton acceptor is the Glu-138. His-141, His-147, Cys-148, Cys-153, Cys-172, and Cys-175 together coordinate Zn(2+).

The protein belongs to the peptidase M54 family. In terms of assembly, monomer. Requires Zn(2+) as cofactor.

Its function is as follows. Probable zinc metalloprotease whose natural substrate is unknown. The polypeptide is Archaemetzincin (Pyrococcus abyssi (strain GE5 / Orsay)).